The primary structure comprises 1169 residues: MEINNQNQCVPYNCLNNPESEILNVAIFSSEQVAEIHLKITRLILENFLPGGSFAFGLFDLIWGIFNEDQWSAFLRQVEELINQRITEFARGQAIQRLVGFGRSYDEYILALKEWENDPDNPASKERVRTRFRTTDDALLTGVPLMAIPGFELATLSVYAQSANLHLALLRDAVFFGERWGLTQTNINDLYSRLKNSIRDYTNHCVRFYNIGLGNLNVIRPEYYRFQRELTISVLDLVALFPNYDIRTYPIPTKSQLTREIYTDPIISPGAQAGYTLQDVLREPHLMDFLNRLIIYTGEYRGIRHWAGHEVESSRTGMMTNIRFPLYGTAATAEPTRFITPSTFPGLNLFYRTLSAPIFRDEPGANIIIRYRTSLVEGVGFIQPNNGEQLYRVRGTLDSLDQLPLEGESSLTEYSHRLCHVRFAQSLRNAEPLDYARVPMFSWTHRSATPTNTIDPDVITQIPLVKAFNLHSGATVVRGPGFTGGDILRRTNAGNFGDMRVNITAPLSQRYRVRIRYASTANLQFHTSINGRAINQANFPATMNSGENLQSGSFRVAGFTTPFTFSDALSTFTIGAFSFSSNNEVYIDGIEFVPAEVTFATESDQDRAQKAVNALFTSSNQIGLKTDVTNYHIDQVSNLVECLSDEFCLDEKRELSEKVKHAKRLCDERNLLQDPNFRGINREPDRGWRGSTDITIQRGDDVFKENYVTLPGTFDECYPTYLYQKIDESKLKAYTRYELRGYIEDSQDLEIYLIRYNAKHETVNVPGTGSLWPLSAQSPIGKCGEPNRCATHLEWNPDLDCSCRDGEKCAHHSHHFSLDIDVGCTDLNEDLGVWVIFKIKTQDGHARLGNLEFLEEKPLLGEALARVKRAEKKWRDKREKLELETNIVYKEAKKSVDALFVNSQYDRLQADTNIAIIHAADKRVHSIREAYLPELSVIPGVNAAIFEELEGRIFTAYSLYDARNVIKNGDFNNGLSCWNVKGHVDVEEQNNHRSVLVVPEWEAEVSQEVRVCPGRGYILRVTAYKEGYGEGCVTIHEIEDNTDELKFSNCVEEEIYPNNTVTCNDYTATQEEYEGTYTSRNRGYDGAYESNSSVPADYASAYEEKAYTDGRRDNTCESNRGYGDYTPLPAGYVTKELEYFPETDKVWIEIGETEGTFIVDSVELLLMEE.

This sequence belongs to the delta endotoxin family.

Functionally, promotes colloidosmotic lysis by binding to the midgut epithelial cells of lepidopteran larvae. Toxic to Pieris rapae. This chain is Pesticidal crystal protein Cry1Gb (cry1Gb), found in Bacillus thuringiensis subsp. wuhanensis.